A 125-amino-acid chain; its full sequence is Cytochrome c2 (125 aa).

An N-terminal signal peptide occupies residues 1 to 21 (MKAIKIAMVGAALVWSASAYA). Positions 23–123 (GDPVKGEQVF…DVIAFLATQH (101 aa)) constitute a Cytochrome c domain. Residues C35, C38, H39, and M101 each coordinate heme c.

It belongs to the cytochrome c family. In terms of processing, binds 1 heme c group covalently per subunit.

Functionally, cytochrome c2 is found mainly in purple, non-sulfur, photosynthetic bacteria where it functions as the electron donor to the oxidized bacteriochlorophyll in the photophosphorylation pathway. However, it may also have a role in the respiratory chain and is found in some non-photosynthetic bacteria. The chain is Cytochrome c2 from Rhodomicrobium vannielii (strain ATCC 17100 / DSM 162 / LMG 4299 / NCIMB 10020 / ATH 3.1.1).